A 124-amino-acid polypeptide reads, in one-letter code: Glutaredoxin-2 (124 aa).

Cysteine 13 and cysteine 16 are joined by a disulfide.

It belongs to the glutaredoxin family. In terms of assembly, homodimer.

The protein localises to the host cytoplasm. Functionally, glutaredoxin necessary for virion morphogenesis and virus replication. Functions as a thiol-disulfide transfer protein between membrane-associated OPG128 and substrates OPG095 or OPG053. The complete pathway for formation of disulfide bonds in intracellular virion membrane proteins sequentially involves oxidation of OPG072, OPG128 and OPG088. Exhibit thioltransferase and dehydroascorbate reductase activities in vitro. This chain is Glutaredoxin-2 (OPG088), found in Homo sapiens (Human).